Consider the following 745-residue polypeptide: Copper-exporting P-type ATPase B (745 aa).

The segment at 1–76 is disordered; sequence MNNGIDPENE…GMDHSHMDHE (76 aa). The Cytoplasmic portion of the chain corresponds to 1 to 108; the sequence is MNNGIDPENE…HMGNFKQKFW (108 aa). Basic and acidic residues predominate over residues 36-76; the sequence is LQEHGKMENMDQHHTHGHMERHQQMDHGHMSGMDHSHMDHE. Repeat copies occupy residues 60-71, 73-84, and 86-97. Residues 60–97 are 3 X 12 AA approximate repeats; the sequence is MDHGHMSGMDHSHMDHEDMSGMNHSHMGHENMSGMDHS. The chain crosses the membrane as a helical span at residues 109–128; it reads LSLILAIPIILFSPMMGMSF. At 129–139 the chain is on the extracellular side; sequence PFQVTFPGSNW. Residues 140-160 form a helical membrane-spanning segment; it reads VVLVLATILFIYGGQPFLSGA. Over 161–170 the chain is Cytoplasmic; the sequence is KMELKQKSPA. Residues 171 to 191 form a helical membrane-spanning segment; that stretch reads MMTLIAMGITVAYVYSVYSFI. At 192–200 the chain is on the extracellular side; that stretch reads ANLINPHTH. The helical transmembrane segment at 201 to 217 threads the bilayer; it reads VMDFFWELATLIVIMLL. At 218–359 the chain is on the cytoplasmic side; it reads GHWIEMNAVS…EFLSDKVAKW (142 aa). A helical transmembrane segment spans residues 360–379; the sequence is LFYVALVVGIIAFIAWLFLA. Residues 380–388 are Extracellular-facing; it reads NLPDALERM. The chain crosses the membrane as a helical span at residues 389-409; that stretch reads VTVFIIACPHALGLAIPLVVA. Residues 410-703 are Cytoplasmic-facing; the sequence is RSTSIAAKNG…QNLWWGAGYN (294 aa). Aspartate 440 functions as the 4-aspartylphosphate intermediate in the catalytic mechanism. Positions 638 and 642 each coordinate Mg(2+). The chain crosses the membrane as a helical span at residues 704–721; sequence IIAIPLAAGILAPIGLIL. Over 722–723 the chain is Extracellular; the sequence is SP. Residues 724-744 traverse the membrane as a helical segment; it reads AVGAVLMSLSTVVVALNALTL. A topological domain (cytoplasmic) is located at residue lysine 745.

Belongs to the cation transport ATPase (P-type) (TC 3.A.3) family. Type IB subfamily. As to quaternary structure, monomer.

Its subcellular location is the cell membrane. The catalysed reaction is Cu(+)(in) + ATP + H2O = Cu(+)(out) + ADP + phosphate + H(+). Its activity is regulated as follows. Inhibited by vanadate. Involved in copper export. Can also export silver. The protein is Copper-exporting P-type ATPase B (copB) of Enterococcus hirae (strain ATCC 9790 / DSM 20160 / JCM 8729 / LMG 6399 / NBRC 3181 / NCIMB 6459 / NCDO 1258 / NCTC 12367 / WDCM 00089 / R).